Here is a 1145-residue protein sequence, read N- to C-terminus: DNA mismatch repair protein msh-3 (1145 aa).

Disordered stretches follow at residues 1 to 183 and 857 to 879; these read MAGP…GAKT and SSSA…LAQL. The segment covering 13 to 33 has biased composition (polar residues); the sequence is ASISSFFTPRNTSPLVNLSQN. A compositionally biased stretch (basic and acidic residues) spans 121-131; it reads AERKKKEELHR. Residues 158–169 are compositionally biased toward acidic residues; sequence GEGEEGEDDEEE. A mispair-binding domain region spans residues 183–307; that stretch reads TGKLTPMELQ…RKLTNVYTKG (125 aa). 882–889 lines the ATP pocket; it reads GPNMGGKS. The segment at 1030 to 1056 is disordered; sequence KSRTSMDDDAMEVDGDGDGQEGAGADK. Acidic residues predominate over residues 1036–1048; it reads DDDAMEVDGDGDG.

The protein belongs to the DNA mismatch repair MutS family. MSH3 subfamily. In terms of assembly, heterodimer consisting of msh-2-msh-3 (MutS beta). Forms a ternary complex with MutL alpha (mlh-1-pms-1).

The protein localises to the nucleus. In terms of biological role, component of the post-replicative DNA mismatch repair system (MMR). Heterodimerizes with msh-2 to form MutS beta, which binds to DNA mismatches thereby initiating DNA repair. Msh-3 provides substrate-binding and substrate specificity to the complex. When bound, the MutS beta heterodimer bends the DNA helix and shields approximately 20 base pairs. Acts mainly to repair insertion-deletion loops (IDLs) from 2 to 13 nucleotides in size, but can also repair base-base and single insertion-deletion mismatches that occur during replication. After mismatch binding, forms a ternary complex with the MutL alpha heterodimer, which is thought to be responsible for directing the downstream MMR events, including strand discrimination, excision, and resynthesis. ATP binding and hydrolysis play a pivotal role in mismatch repair functions. The sequence is that of DNA mismatch repair protein msh-3 (msh-3) from Neurospora crassa (strain ATCC 24698 / 74-OR23-1A / CBS 708.71 / DSM 1257 / FGSC 987).